The sequence spans 287 residues: Elongation factor Ts (287 aa).

Residues 80-83 (TDFL) are involved in Mg(2+) ion dislocation from EF-Tu.

Belongs to the EF-Ts family.

The protein localises to the cytoplasm. In terms of biological role, associates with the EF-Tu.GDP complex and induces the exchange of GDP to GTP. It remains bound to the aminoacyl-tRNA.EF-Tu.GTP complex up to the GTP hydrolysis stage on the ribosome. This Pseudomonas savastanoi pv. phaseolicola (strain 1448A / Race 6) (Pseudomonas syringae pv. phaseolicola (strain 1448A / Race 6)) protein is Elongation factor Ts.